Consider the following 101-residue polypeptide: Small ribosomal subunit protein uS14A (101 aa).

Positions 29–60 (EIIRSPRSTPEQRTAAQNELAHQPRDASAVRV) are disordered. Residues 34 to 45 (PRSTPEQRTAAQ) are compositionally biased toward polar residues.

The protein belongs to the universal ribosomal protein uS14 family. In terms of assembly, part of the 30S ribosomal subunit. Contacts proteins S3 and S10.

In terms of biological role, binds 16S rRNA, required for the assembly of 30S particles and may also be responsible for determining the conformation of the 16S rRNA at the A site. The protein is Small ribosomal subunit protein uS14A of Mycolicibacterium paratuberculosis (strain ATCC BAA-968 / K-10) (Mycobacterium paratuberculosis).